Here is a 501-residue protein sequence, read N- to C-terminus: 2,3-bisphosphoglycerate-independent phosphoglycerate mutase (501 aa).

D12 and S62 together coordinate Mn(2+). Catalysis depends on S62, which acts as the Phosphoserine intermediate. Residues H121, 150–151 (RD), R182, R188, 253–256 (RSDR), and K322 contribute to the substrate site. D389, H393, D430, H431, and H449 together coordinate Mn(2+).

The protein belongs to the BPG-independent phosphoglycerate mutase family. As to quaternary structure, monomer. It depends on Mn(2+) as a cofactor.

The catalysed reaction is (2R)-2-phosphoglycerate = (2R)-3-phosphoglycerate. The protein operates within carbohydrate degradation; glycolysis; pyruvate from D-glyceraldehyde 3-phosphate: step 3/5. Catalyzes the interconversion of 2-phosphoglycerate and 3-phosphoglycerate. The sequence is that of 2,3-bisphosphoglycerate-independent phosphoglycerate mutase from Ehrlichia ruminantium (strain Gardel).